We begin with the raw amino-acid sequence, 101 residues long: NAD(P)H-quinone oxidoreductase subunit 4L, chloroplastic (101 aa).

The next 3 helical transmembrane spans lie at 2–22 (MLEH…YGLI), 32–52 (MCLE…SDFF), and 61–81 (IFSI…SAIV).

Belongs to the complex I subunit 4L family. NDH is composed of at least 16 different subunits, 5 of which are encoded in the nucleus.

Its subcellular location is the plastid. It localises to the chloroplast thylakoid membrane. The catalysed reaction is a plastoquinone + NADH + (n+1) H(+)(in) = a plastoquinol + NAD(+) + n H(+)(out). It catalyses the reaction a plastoquinone + NADPH + (n+1) H(+)(in) = a plastoquinol + NADP(+) + n H(+)(out). Functionally, NDH shuttles electrons from NAD(P)H:plastoquinone, via FMN and iron-sulfur (Fe-S) centers, to quinones in the photosynthetic chain and possibly in a chloroplast respiratory chain. The immediate electron acceptor for the enzyme in this species is believed to be plastoquinone. Couples the redox reaction to proton translocation, and thus conserves the redox energy in a proton gradient. The polypeptide is NAD(P)H-quinone oxidoreductase subunit 4L, chloroplastic (Citrus sinensis (Sweet orange)).